The following is a 69-amino-acid chain: DNA-directed RNA polymerase subunit omega (69 aa).

This sequence belongs to the RNA polymerase subunit omega family. As to quaternary structure, the RNAP catalytic core consists of 2 alpha, 1 beta, 1 beta' and 1 omega subunit. When a sigma factor is associated with the core the holoenzyme is formed, which can initiate transcription.

The enzyme catalyses RNA(n) + a ribonucleoside 5'-triphosphate = RNA(n+1) + diphosphate. Promotes RNA polymerase assembly. Latches the N- and C-terminal regions of the beta' subunit thereby facilitating its interaction with the beta and alpha subunits. This chain is DNA-directed RNA polymerase subunit omega, found in Symbiobacterium thermophilum (strain DSM 24528 / JCM 14929 / IAM 14863 / T).